The sequence spans 908 residues: DNA mismatch repair protein MutS (908 aa).

Residue glycine 659 to serine 666 participates in ATP binding.

This sequence belongs to the DNA mismatch repair MutS family.

In terms of biological role, this protein is involved in the repair of mismatches in DNA. It is possible that it carries out the mismatch recognition step. This protein has a weak ATPase activity. This is DNA mismatch repair protein MutS from Parvibaculum lavamentivorans (strain DS-1 / DSM 13023 / NCIMB 13966).